We begin with the raw amino-acid sequence, 95 residues long: Fungal defensin plectasin (95 aa).

Positions 1–23 (MQFTTILSIGITVFGLLNTGAFA) are cleaved as a signal peptide. Positions 24-55 (APQPVPEAYAVSDPEAHPDDFAGMDANQLQKR) are excised as a propeptide. The beta-D-GlcNAc-(1-&gt;4)-Mur2Ac(oyl-L-Ala-gamma-D-Glu-L-Lys-D-Ala-D-Ala)-di-trans,octa-cis-undecaprenyl diphosphate site is built by Phe57, Gly58, and Cys59. 3 disulfide bridges follow: Cys59–Cys85, Cys70–Cys92, and Cys74–Cys94. Positions 61–64 (GPWD) are binds to membrane interface. Beta-D-GlcNAc-(1-&gt;4)-Mur2Ac(oyl-L-Ala-gamma-D-Glu-L-Lys-D-Ala-D-Ala)-di-trans,octa-cis-undecaprenyl diphosphate is bound by residues Asp67, His73, Tyr84, Ala86, Gly88, Cys92, and Lys93. A binds to membrane interface region spans residues 86–92 (AKGGFVC).

Belongs to the invertebrate defensin family. Type 2 subfamily.

The protein localises to the secreted. Its subcellular location is the host cell membrane. Functionally, antimicrobial peptide that potently acts against several species of Gram-positive bacteria. It selectively inhibits peptidoglycan biosynthesis through complex formation with the cell wall precursor lipid II (1:1 molar ratio) thus inhibiting cell wall synthesis. It does not disrupt cell membranes. Is especially active against numerous clinical isolates of S.pneumoniae, including all 90 different serotypes and isolates resistant to clinically used antibiotics. In vitro, shows considerable selectivity for bacteria over mammalian cells. The peptide synthesized in D-amino acids does not show antibacterial activity. In vitro, acts on voltage-gated potassium channels by moderately inhibiting mammalian Kv1.3/KCNA3 (IC(50)=2.8 uM), and moderately inhibiting others potassium channels. This Pseudoplectania nigrella (Ebony cup) protein is Fungal defensin plectasin (DEF).